A 480-amino-acid polypeptide reads, in one-letter code: UDP-glucose 6-dehydrogenase 2 (480 aa).

NAD(+)-binding positions include 8–13, Asp33, Arg38, 86–90, 127–128, and Glu161; these read GAGYVG, VNTPT, and ST. Residues 157–161, 216–223, and 256–269 each bind substrate; these read EFLAE, KLAANAFL, and RIGP…VGFG. Residue Cys272 is the Nucleophile of the active site. 272–275 provides a ligand contact to NAD(+); that stretch reads CFQK. 334–335 is a binding site for substrate; that stretch reads FK. Arg342 provides a ligand contact to NAD(+). Arg447 provides a ligand contact to substrate.

It belongs to the UDP-glucose/GDP-mannose dehydrogenase family. Preferentially expressed in roots.

It carries out the reaction UDP-alpha-D-glucose + 2 NAD(+) + H2O = UDP-alpha-D-glucuronate + 2 NADH + 3 H(+). The protein operates within nucleotide-sugar biosynthesis; UDP-alpha-D-glucuronate biosynthesis; UDP-alpha-D-glucuronate from UDP-alpha-D-glucose: step 1/1. Its activity is regulated as follows. Inhibited by UDP-xylose. Involved in the biosynthesis of UDP-glucuronic acid (UDP-GlcA), providing nucleotide sugars for cell-wall polymers. Required for the formation of cell wall ingrowths on the outer cell walls of nematode-induced syncytia. The protein is UDP-glucose 6-dehydrogenase 2 (UGD2) of Arabidopsis thaliana (Mouse-ear cress).